We begin with the raw amino-acid sequence, 248 residues long: Large ribosomal subunit protein uL1 (248 aa).

Belongs to the universal ribosomal protein uL1 family. In terms of assembly, part of the 50S ribosomal subunit.

Binds directly to 23S rRNA. The L1 stalk is quite mobile in the ribosome, and is involved in E site tRNA release. Functionally, protein L1 is also a translational repressor protein, it controls the translation of the L11 operon by binding to its mRNA. This Orientia tsutsugamushi (strain Boryong) (Rickettsia tsutsugamushi) protein is Large ribosomal subunit protein uL1.